The primary structure comprises 667 residues: MSSQPAGNQTSPGPTEDYSYGSWYIDEPQGGEELQPEGEVPSCHTSIPPSLYHACLASLSILVLLLLAMLVRRRQLWPDCVRGRPGLPSPVDFLAGDRPQAVPAAVFVVLFSSLCLLLPDEDPLPFLTLASAPSQDGKTEAPRGAWKILGLFYYAALCYPLAACATAGHTAAHLLGSTLSWAHLGVQVWQRAECPQVPKIYKYYSLLASLPLLLGLGFLSLWYPVQLVRSFSCRTGAGSKGLQSSYSEEYLRNLLCRKKLGSSSHTSKHGFLSWAWVCLRHCIYTPQPGFRLPLKLVLSATLTGTAIYQVALLLLVGMVPNIQKVRAGVTTDVSYLLAGFGIVLSEDKQEVVELVKHHLWALEVCYISALVLSCSLTFLVLMRSLVTHRTNLRALHRGAALDSSPLHRSPHPSRRAIFCWMSFSAYQTAFICLGLLVQQIIFFLGTTALAFLVLMPVLHGRNLLLFRSLESSWPFWLTLALAVILQSMAAHWVFLETHDGHPQLTNRRVLYAATFLLFPLNVLVGAMVATWRVLLSALYNAIHLGQMDLSLLPPRAATLDPGYYTYRNFLKIEVSQSHPAMTAFCSLLLQARSLLPRTMAAPQDSLRPGEEDEGMQLLQTKDSMAKGARPRANRGRARWGLAYTLLHNPTLQVFRKTALLGANGAQP.

A compositionally biased stretch (polar residues) spans 1–13 (MSSQPAGNQTSPG). The interval 1–22 (MSSQPAGNQTSPGPTEDYSYGS) is disordered. The Extracellular portion of the chain corresponds to 1 to 50 (MSSQPAGNQTSPGPTEDYSYGSWYIDEPQGGEELQPEGEVPSCHTSIPPS). An N-linked (GlcNAc...) asparagine glycan is attached at Asn-8. The chain crosses the membrane as a helical span at residues 51–71 (LYHACLASLSILVLLLLAMLV). The Cytoplasmic portion of the chain corresponds to 72-98 (RRRQLWPDCVRGRPGLPSPVDFLAGDR). A helical membrane pass occupies residues 99–119 (PQAVPAAVFVVLFSSLCLLLP). Over 120 to 144 (DEDPLPFLTLASAPSQDGKTEAPRG) the chain is Extracellular. The chain crosses the membrane as a helical span at residues 145–165 (AWKILGLFYYAALCYPLAACA). Topologically, residues 166–168 (TAG) are cytoplasmic. The chain crosses the membrane as a helical span at residues 169–189 (HTAAHLLGSTLSWAHLGVQVW). Residues 190-205 (QRAECPQVPKIYKYYS) are Extracellular-facing. Residues 206–226 (LLASLPLLLGLGFLSLWYPVQ) form a helical membrane-spanning segment. Over 227 to 295 (LVRSFSCRTG…PQPGFRLPLK (69 aa)) the chain is Cytoplasmic. The segment at 235-293 (TGAGSKGLQSSYSEEYLRNLLCRKKLGSSSHTSKHGFLSWAWVCLRHCIYTPQPGFRLP) is interaction with RBP1. A helical transmembrane segment spans residues 296–316 (LVLSATLTGTAIYQVALLLLV). At 317-367 (GMVPNIQKVRAGVTTDVSYLLAGFGIVLSEDKQEVVELVKHHLWALEVCYI) the chain is on the extracellular side. The chain crosses the membrane as a helical span at residues 368 to 388 (SALVLSCSLTFLVLMRSLVTH). The Cytoplasmic portion of the chain corresponds to 389 to 422 (RTNLRALHRGAALDSSPLHRSPHPSRRAIFCWMS). A helical transmembrane segment spans residues 423 to 443 (FSAYQTAFICLGLLVQQIIFF). The Extracellular portion of the chain corresponds to 444–473 (LGTTALAFLVLMPVLHGRNLLLFRSLESSW). The helical transmembrane segment at 474–494 (PFWLTLALAVILQSMAAHWVF) threads the bilayer. Residues 495-509 (LETHDGHPQLTNRRV) lie on the Cytoplasmic side of the membrane. Residues 510 to 547 (LYAATFLLFPLNVLVGAMVATWRVLLSALYNAIHLGQM) constitute an intramembrane region (helical). Topologically, residues 548–667 (DLSLLPPRAA…ALLGANGAQP (120 aa)) are cytoplasmic. Tyr-643 is modified (phosphotyrosine).

In terms of assembly, homodimer. Interacts with JAK2 and STAT5. Interacts (via extracellular domains) with RBP4. Interacts (via cytoplasmic domains) with RBP1. Phosphorylated on tyrosine residues in response to RBP4 binding. Phosphorylation requires the presence of LRAT, suggesting it may be triggered by the uptake of retinol that is then metabolized within the cell to retinoids that function as signaling molecules.

The protein localises to the cell membrane. In terms of biological role, functions as a retinol transporter. Accepts all-trans retinol from the extracellular retinol-binding protein RBP4, facilitates retinol transport across the cell membrane, and then transfers retinol to the cytoplasmic retinol-binding protein RBP1. Retinol uptake is enhanced by LRAT, an enzyme that converts retinol to all-trans retinyl esters, the storage forms of vitamin A. Contributes to the activation of a signaling cascade that depends on retinol transport and LRAT-dependent generation of retinol metabolites that then trigger activation of JAK2 and its target STAT5, and ultimately increase the expression of SOCS3 and inhibit cellular responses to insulin. Important for the homeostasis of vitamin A and its derivatives, such as retinoic acid. STRA6-mediated transport is particularly important in the eye, and under conditions of dietary vitamin A deficiency. Does not transport retinoic acid. The protein is Receptor for retinol uptake STRA6 (STRA6) of Pongo abelii (Sumatran orangutan).